Consider the following 381-residue polypeptide: Neuropeptide Y receptor type 2 (381 aa).

The segment at 1 to 37 (MGPIGTEADENQTVEEIKVEPYGPGHTTPRGELAPDP) is disordered. The Extracellular segment spans residues 1 to 52 (MGPIGTEADENQTVEEIKVEPYGPGHTTPRGELAPDPEPELIDSTKLTEVRV). N11 carries an N-linked (GlcNAc...) asparagine glycan. The helical transmembrane segment at 53 to 73 (VLILAYCSIILLGVVGNSLVI) threads the bilayer. The Cytoplasmic portion of the chain corresponds to 74–87 (HVVIKFKSMRTVTN). Residues 88-108 (FFIANLAVADLLVNTLCLPFT) form a helical membrane-spanning segment. Residues 109-125 (LTYTLMGEWKMGPVLCH) lie on the Extracellular side of the membrane. C124 and C204 are disulfide-bonded. Residues 126–146 (LVPYAQGLAVQVSTVTLTVIA) traverse the membrane as a helical segment. At 147-166 (LDRHRCIVYHLDSKISKQNS) the chain is on the cytoplasmic side. Residues 167–187 (FLIIGLAWGISALLASPLAIF) form a helical membrane-spanning segment. Over 188–217 (REYSLIEIIPDFEIVACTEKWPGEEKSIYG) the chain is Extracellular. The helical transmembrane segment at 218–238 (TVYSLSSLLILYVLPLGIISV) threads the bilayer. The Cytoplasmic segment spans residues 239 to 269 (SYVRIWSKLKNHVSPGAANDHYHQRRQKTTK). The chain crosses the membrane as a helical span at residues 270 to 290 (MLVFVVVVFAVSWLPLHAFQL). Residues 291–305 (AVDIDSQVLDLKEYK) are Extracellular-facing. The chain crosses the membrane as a helical span at residues 306 to 326 (LIFTVFHIIAMCSTFANPLLY). Residues 327 to 381 (GWMNSNYRKAFLSAFRCQQRLDAIQSEVCVTGKAKTNVEVEKNHGAADSAEATNV) lie on the Cytoplasmic side of the membrane. C343 is lipidated: S-palmitoyl cysteine.

This sequence belongs to the G-protein coupled receptor 1 family.

The protein localises to the cell membrane. In terms of biological role, receptor for neuropeptide Y and peptide YY. The chain is Neuropeptide Y receptor type 2 (NPY2R) from Cavia porcellus (Guinea pig).